The chain runs to 105 residues: Large ribosomal subunit protein uL24 (105 aa).

The protein belongs to the universal ribosomal protein uL24 family. Part of the 50S ribosomal subunit.

In terms of biological role, one of two assembly initiator proteins, it binds directly to the 5'-end of the 23S rRNA, where it nucleates assembly of the 50S subunit. Functionally, one of the proteins that surrounds the polypeptide exit tunnel on the outside of the subunit. The sequence is that of Large ribosomal subunit protein uL24 from Wolbachia sp. subsp. Brugia malayi (strain TRS).